The sequence spans 994 residues: Pre-mRNA-processing ATP-dependent RNA helicase PRP5 (994 aa).

Residues M1–L18 are compositionally biased toward polar residues. Disordered regions lie at residues M1–E105, F170–F190, and S235–Q275. Composition is skewed to basic and acidic residues over residues E20–A32 and T70–V79. A coiled-coil region spans residues E20–N87. The segment covering A84 to S102 has biased composition (polar residues). Over residues N172–K181 the composition is skewed to basic and acidic residues. Coiled-coil stretches lie at residues V217–A284 and D310–V382. Residues S235–G245 are compositionally biased toward polar residues. The short motif at L387 to C416 is the Q motif element. The 179-residue stretch at I419–I597 folds into the Helicase ATP-binding domain. Residue A432–T439 participates in ATP binding. A DEAD box motif is present at residues D545–D548. Positions K629–A780 constitute a Helicase C-terminal domain. A disordered region spans residues Y842–T867. Over residues S845–T867 the composition is skewed to low complexity.

Belongs to the DEAD box helicase family. DDX46/PRP5 subfamily.

The protein localises to the nucleus. The enzyme catalyses ATP + H2O = ADP + phosphate + H(+). Its function is as follows. ATP-dependent RNA helicase involved spliceosome assembly and in nuclear splicing. Catalyzes an ATP-dependent conformational change of U2 snRNP. Bridges U1 and U2 snRNPs and enables stable U2 snRNP association with intron RNA. The protein is Pre-mRNA-processing ATP-dependent RNA helicase PRP5 (PRP5) of Lodderomyces elongisporus (strain ATCC 11503 / CBS 2605 / JCM 1781 / NBRC 1676 / NRRL YB-4239) (Yeast).